The following is a 321-amino-acid chain: Degreening-related gene dee76 protein (321 aa).

Belongs to the Mo25 family.

The protein is Degreening-related gene dee76 protein (DEE76) of Auxenochlorella protothecoides (Green microalga).